Consider the following 263-residue polypeptide: Inner membrane protein YpjD (263 aa).

Topologically, residues 1–3 (MPV) are periplasmic. The helical transmembrane segment at 4 to 23 (FALLALVAYSVSLALIVPGL) threads the bilayer. Residues 24–34 (LQKNGGWRRMA) are Cytoplasmic-facing. Residues 35–54 (IISAVIALVCHAIALEARIL) traverse the membrane as a helical segment. Over 55–63 (PDGDSGQNL) the chain is Periplasmic. Residues 64 to 83 (SLLNVGSLVSLMICTVMTIV) traverse the membrane as a helical segment. Topologically, residues 84–89 (ASRNRG) are cytoplasmic. Residues 90 to 109 (WLLLPIVYAFALINLALATF) traverse the membrane as a helical segment. The Periplasmic segment spans residues 110–123 (MPNEYITHLEATPG). The helical transmembrane segment at 124–146 (MLVHIGLSLFSYATLIIAALYAL) threads the bilayer. Over 147-181 (QLAWIDYQLKNKKLAFNQEMPPLMSIERKMFHITQ) the chain is Cytoplasmic. Residues 182–201 (IGVVLLTLTLCTGLFYMHNL) traverse the membrane as a helical segment. Residues 202 to 210 (FSMENIDKA) lie on the Periplasmic side of the membrane. A helical transmembrane segment spans residues 211–228 (VLSIVAWFVYIVLLWGHY). At 229–236 (HEGWRGRR) the chain is on the cytoplasmic side. The helical transmembrane segment at 237-259 (VVWFNVAGAVILTLAYFGSRIVQ) threads the bilayer. Topologically, residues 260–263 (QLIS) are periplasmic.

The protein resides in the cell inner membrane. This Escherichia coli O157:H7 protein is Inner membrane protein YpjD (ypjD).